Reading from the N-terminus, the 257-residue chain is Ribonuclease PH (257 aa).

Phosphate is bound by residues Arg-86 and 124–126 (GTR).

This sequence belongs to the RNase PH family. In terms of assembly, homohexameric ring arranged as a trimer of dimers.

The catalysed reaction is tRNA(n+1) + phosphate = tRNA(n) + a ribonucleoside 5'-diphosphate. Its function is as follows. Phosphorolytic 3'-5' exoribonuclease that plays an important role in tRNA 3'-end maturation. Removes nucleotide residues following the 3'-CCA terminus of tRNAs; can also add nucleotides to the ends of RNA molecules by using nucleoside diphosphates as substrates, but this may not be physiologically important. Probably plays a role in initiation of 16S rRNA degradation (leading to ribosome degradation) during starvation. The polypeptide is Ribonuclease PH (Halalkalibacterium halodurans (strain ATCC BAA-125 / DSM 18197 / FERM 7344 / JCM 9153 / C-125) (Bacillus halodurans)).